Here is a 252-residue protein sequence, read N- to C-terminus: PF03932 family protein CutC (252 aa).

The protein belongs to the CutC family.

It is found in the cytoplasm. In Pectobacterium atrosepticum (strain SCRI 1043 / ATCC BAA-672) (Erwinia carotovora subsp. atroseptica), this protein is PF03932 family protein CutC.